Consider the following 249-residue polypeptide: Proteasome activator complex subunit 1 (249 aa).

The disordered stretch occupies residues 60–102 (PLDIPVPDPVKEKEKEERKKQQEKEDKDEKKKGEDEDKGPPCG). Over residues 68–98 (PVKEKEKEERKKQQEKEDKDEKKKGEDEDKG) the composition is skewed to basic and acidic residues.

The protein belongs to the PA28 family. As to quaternary structure, heterodimer of PSME1 and PSME2, which forms a hexameric ring. PSME1 can form homoheptamers.

Its function is as follows. Implicated in immunoproteasome assembly and required for efficient antigen processing. The PA28 activator complex enhances the generation of class I binding peptides by altering the cleavage pattern of the proteasome. This chain is Proteasome activator complex subunit 1 (PSME1), found in Homo sapiens (Human).